The chain runs to 149 residues: MKKRHQRLFLVLGVVAGVSVATALVLNAFRDNMTFFITPSEVMAKSDMPERHFRIGGLVEDGSVERDSDSTQVRFRVTDTEASVPVDFEGILPDLFREGQGVVVEGRITSNGVFKADNVMARHDEDYMPAEAQEALDRVEHSVDEVGDY.

Residues 1–7 (MKKRHQR) are Cytoplasmic-facing. A helical; Signal-anchor for type II membrane protein transmembrane segment spans residues 8 to 28 (LFLVLGVVAGVSVATALVLNA). At 29 to 149 (FRDNMTFFIT…EHSVDEVGDY (121 aa)) the chain is on the periplasmic side. Heme is bound by residues histidine 123 and tyrosine 127.

The protein belongs to the CcmE/CycJ family.

The protein localises to the cell inner membrane. Functionally, heme chaperone required for the biogenesis of c-type cytochromes. Transiently binds heme delivered by CcmC and transfers the heme to apo-cytochromes in a process facilitated by CcmF and CcmH. In Halorhodospira halophila (strain DSM 244 / SL1) (Ectothiorhodospira halophila (strain DSM 244 / SL1)), this protein is Cytochrome c-type biogenesis protein CcmE.